The primary structure comprises 107 residues: MTTEIKKLDPDTAIDIAYDIFLEMAGENLDPADILLFNLQFEERGGVEFVETADDWEEEIGVLIDQEEYAEVWVGLVNEQDEMDDVFAKFLISHREEDREFHVIWKK.

It belongs to the putative dsDNA mimic protein family.

Its function is as follows. May act as a double-stranded DNA (dsDNA) mimic. Probably regulates the activity of a dsDNA-binding protein. In Haemophilus influenzae (strain PittGG), this protein is Putative double-stranded DNA mimic protein CGSHiGG_01135.